A 226-amino-acid chain; its full sequence is Hand transcription factor 1 (226 aa).

Polar residues predominate over residues 1 to 15 (MVKSTTAGNNAVSSL). Residues 1-35 (MVKSTTAGNNAVSSLESTDSKKSRKEKSREKEHRR) form a disordered region. Residues 23–36 (SRKEKSREKEHRRA) form a basic motif region. Residues 23–77 (SRKEKSREKEHRRAQCINSAFEILQQHIPYLKSEERKSLPKIKTLRLAMQYIDHL) enclose the bHLH domain. The interval 37-77 (QCINSAFEILQQHIPYLKSEERKSLPKIKTLRLAMQYIDHL) is helix-loop-helix motif.

The protein resides in the nucleus. In terms of biological role, probable transcription factor which regulates early embryonic myogenesis, in cooperation with transcription factors unc-120 and hlh-1. Involved in controlling the number and position of somatic gonadal precursor cells (SGPs) in the gonadal primordium, and embryonic body shape. The protein is Hand transcription factor 1 of Caenorhabditis elegans.